The following is a 147-amino-acid chain: MGFIFSKSMNENMKNQQEFMVMHARLQLERQLIMQNEMRERQMAMQIAWSREFLKYFGTFFGIATISLAAGAIKRKKPAFLIPIVPLSFIFTYQYDLGYGTLLQRMKSEAEDILETEKTKLELPKGLITFESLEKARREQSKFFSDK.

The Extracellular segment spans residues 1-52 (MGFIFSKSMNENMKNQQEFMVMHARLQLERQLIMQNEMRERQMAMQIAWSRE). Residues 53–73 (FLKYFGTFFGIATISLAAGAI) traverse the membrane as a helical segment. At 74-78 (KRKKP) the chain is on the cytoplasmic side. A helical membrane pass occupies residues 79–99 (AFLIPIVPLSFIFTYQYDLGY). At 100–147 (GTLLQRMKSEAEDILETEKTKLELPKGLITFESLEKARREQSKFFSDK) the chain is on the extracellular side.

In terms of assembly, interacts with PLAT. Interacts with PLAUR. Expressed in adrenal medulla (pheochromocytoma).

It is found in the cell membrane. In terms of biological role, receptor for plasminogen. Regulates urokinase plasminogen activator-dependent and stimulates tissue-type plasminogen activator-dependent cell surface plasminogen activation. Proposed to be part of a local catecholaminergic cell plasminogen activation system that regulates neuroendocrine prohormone processing. Involved in regulation of inflammatory response; regulates monocyte chemotactic migration and matrix metalloproteinase activation, such as of MMP2 and MMP9. This chain is Plasminogen receptor (KT) (Plgrkt), found in Rattus norvegicus (Rat).